The chain runs to 270 residues: MDWKKLQDLLSGVNQYSTAFGRIWLSVVFVFRVLVYVVAAERVWGDEQKDFDCNTRQPGCTNVCYDNFFPISNIRLWALQLIFVTCPSMLVILHVAYREERERKHRQKHGEQCAKLYSHPGKKHGGLWWTYLFSLIFKLIIELVFLYVLHTLWHGFTMPRLVQCASIVPCPNTVDCYIARPTEKKVFTYFMVGASAVCIILTICEICYLIFHRIMRGISKGKSTKSISSPKSSSRASTCRCHHKLLESGDPEADPASEKLQASAPSLTPI.

Residues 1–20 (MDWKKLQDLLSGVNQYSTAF) lie on the Cytoplasmic side of the membrane. The helical transmembrane segment at 21–40 (GRIWLSVVFVFRVLVYVVAA) threads the bilayer. Residues 41 to 75 (ERVWGDEQKDFDCNTRQPGCTNVCYDNFFPISNIR) lie on the Extracellular side of the membrane. The helical transmembrane segment at 76-98 (LWALQLIFVTCPSMLVILHVAYR) threads the bilayer. Topologically, residues 99–126 (EERERKHRQKHGEQCAKLYSHPGKKHGG) are cytoplasmic. A helical transmembrane segment spans residues 127-149 (LWWTYLFSLIFKLIIELVFLYVL). The Extracellular portion of the chain corresponds to 150–188 (HTLWHGFTMPRLVQCASIVPCPNTVDCYIARPTEKKVFT). The chain crosses the membrane as a helical span at residues 189-211 (YFMVGASAVCIILTICEICYLIF). Residues 212-270 (HRIMRGISKGKSTKSISSPKSSSRASTCRCHHKLLESGDPEADPASEKLQASAPSLTPI) are Cytoplasmic-facing. The tract at residues 246–270 (LESGDPEADPASEKLQASAPSLTPI) is disordered.

The protein belongs to the connexin family. Beta-type (group I) subfamily. A connexon is composed of a hexamer of connexins. Interacts with CNST.

It is found in the cell membrane. It localises to the cell junction. The protein localises to the gap junction. In terms of biological role, one gap junction consists of a cluster of closely packed pairs of transmembrane channels, the connexons, through which materials of low MW diffuse from one cell to a neighboring cell. The chain is Gap junction beta-3 protein (Gjb3) from Mus musculus (Mouse).